The sequence spans 428 residues: GTPase Obg (428 aa).

The region spanning Met1–Leu158 is the Obg domain. The OBG-type G domain occupies Ala159–Glu328. GTP-binding positions include Gly165–Ser172, Phe190–Thr194, Asp212–Gly215, Thr282–Asp285, and Ser309–Val311. The Mg(2+) site is built by Ser172 and Thr192. The OCT domain occupies Tyr350–Asp428.

It belongs to the TRAFAC class OBG-HflX-like GTPase superfamily. OBG GTPase family. Monomer. The cofactor is Mg(2+).

The protein localises to the cytoplasm. An essential GTPase which binds GTP, GDP and possibly (p)ppGpp with moderate affinity, with high nucleotide exchange rates and a fairly low GTP hydrolysis rate. Plays a role in control of the cell cycle, stress response, ribosome biogenesis and in those bacteria that undergo differentiation, in morphogenesis control. The chain is GTPase Obg from Lactobacillus gasseri (strain ATCC 33323 / DSM 20243 / BCRC 14619 / CIP 102991 / JCM 1131 / KCTC 3163 / NCIMB 11718 / NCTC 13722 / AM63).